We begin with the raw amino-acid sequence, 450 residues long: 23S rRNA (uracil(1939)-C(5))-methyltransferase RlmD (450 aa).

The tract at residues 1 to 22 (MARNKGGLRFQPSGGARGPAIP) is disordered. Residues 20-78 (AIPVGKKQRLTIERLAHDGRGIAHEAGMTWFVSGGLPGEELEARVLGARSKVVDARSER) form the TRAM domain. [4Fe-4S] cluster contacts are provided by cysteine 91, cysteine 97, cysteine 100, and cysteine 179. Residues glutamine 283, phenylalanine 312, asparagine 317, glutamate 333, aspartate 360, and aspartate 381 each coordinate S-adenosyl-L-methionine. Cysteine 407 (nucleophile) is an active-site residue.

This sequence belongs to the class I-like SAM-binding methyltransferase superfamily. RNA M5U methyltransferase family. RlmD subfamily.

The catalysed reaction is uridine(1939) in 23S rRNA + S-adenosyl-L-methionine = 5-methyluridine(1939) in 23S rRNA + S-adenosyl-L-homocysteine + H(+). Catalyzes the formation of 5-methyl-uridine at position 1939 (m5U1939) in 23S rRNA. The sequence is that of 23S rRNA (uracil(1939)-C(5))-methyltransferase RlmD from Pseudomonas aeruginosa (strain UCBPP-PA14).